Consider the following 516-residue polypeptide: L-amino-acid oxidase (516 aa).

A signal peptide spans 1–18 (MNVFFMFSLLFLAALGSC). The cysteines at positions 28 and 189 are disulfide-linked. FAD contacts are provided by residues 61-62 (MA), 81-82 (EA), Arg-89, and 103-106 (GPMR). Residues Arg-106 and His-239 each coordinate substrate. Residue Val-279 participates in FAD binding. Cys-349 and Cys-430 form a disulfide bridge. A glycan (N-linked (GlcNAc...) asparagine) is linked at Asn-379. Tyr-390 provides a ligand contact to substrate. FAD is bound by residues Glu-475 and 482–487 (GWIDST). Substrate is bound at residue 482-483 (GW).

The protein belongs to the flavin monoamine oxidase family. FIG1 subfamily. Homodimer; non-covalently linked. It depends on FAD as a cofactor. Expressed by the venom gland.

The protein resides in the secreted. It catalyses the reaction an L-alpha-amino acid + O2 + H2O = a 2-oxocarboxylate + H2O2 + NH4(+). Catalyzes an oxidative deamination of predominantly hydrophobic and aromatic L-amino acids, thus producing hydrogen peroxide that may contribute to the diverse toxic effects of this enzyme. Exhibits diverse biological activities, such as hemolysis, edema, hemorrhage, apoptosis, antibacterial and antiparasitic activities, as well as regulation of platelet aggregation. Effects of snake L-amino oxidases on platelets are controversial, since they either induce aggregation or inhibit agonist-induced aggregation. These different effects are probably due to different experimental conditions. This chain is L-amino-acid oxidase, found in Crotalus adamanteus (Eastern diamondback rattlesnake).